The primary structure comprises 780 residues: Kojibiose phosphorylase (780 aa).

354-355 (WD) contributes to the substrate binding site. Glu-496 serves as the catalytic Proton donor. 608-609 (KQ) contacts substrate.

The protein belongs to the glycosyl hydrolase 65 family.

The enzyme catalyses kojibiose + phosphate = beta-D-glucose 1-phosphate + D-glucose. Catalyzes the reversible phosphorolysis of kojibiose into beta-D-glucose 1-phosphate (Glc1P) and D-glucose. In the reverse direction, uses Glc1P as acceptor to produce alpha-1,2-glucans up to a degree of polymerization of 6. The protein is Kojibiose phosphorylase of Halothermothrix orenii (strain H 168 / OCM 544 / DSM 9562).